Here is a 217-residue protein sequence, read N- to C-terminus: MKGLIGQKLGMTRLFDKDGVSIPVTMIEITPHRVTQIKNIENDGYCAVQVTTGMKNFKHINRPETGHMIKSGVDAGRGVWEFRCEEAGMPQLSLGDIITIQIFKNVKKVDITGISKGKGFAGTIKRWNFHMQDASHGNSLSHRAPGSIGQNQTPGRVFKGKKMAGQLGNYKVTVQNLDVVNVDVKLNLLLVKGAVPGTIGGNLSIKKSVKINIREKM.

Glutamine 152 carries the N5-methylglutamine modification.

The protein belongs to the universal ribosomal protein uL3 family. As to quaternary structure, part of the 50S ribosomal subunit. Forms a cluster with proteins L14 and L19. In terms of processing, methylated by PrmB.

In terms of biological role, one of the primary rRNA binding proteins, it binds directly near the 3'-end of the 23S rRNA, where it nucleates assembly of the 50S subunit. This is Large ribosomal subunit protein uL3 from Blochmanniella pennsylvanica (strain BPEN).